The sequence spans 245 residues: Small ribosomal subunit protein uS3 (245 aa).

The region spanning 39–111 is the KH type-2 domain; sequence IRNFINKNYS…EVFFNVIEIK (73 aa).

This sequence belongs to the universal ribosomal protein uS3 family. As to quaternary structure, part of the 30S ribosomal subunit. Forms a tight complex with proteins S10 and S14.

Functionally, binds the lower part of the 30S subunit head. Binds mRNA in the 70S ribosome, positioning it for translation. In Phytoplasma mali (strain AT), this protein is Small ribosomal subunit protein uS3.